The following is a 376-amino-acid chain: Chaperone protein DnaJ (376 aa).

One can recognise a J domain in the interval 5-70; the sequence is DFYETLGVAK…QKRAAYDRYG (66 aa). A CR-type zinc finger spans residues 137–215; the sequence is GKTAQIRVPT…CHGQGRVTEE (79 aa). The Zn(2+) site is built by cysteine 150, cysteine 153, cysteine 167, cysteine 170, cysteine 189, cysteine 192, cysteine 203, and cysteine 206. CXXCXGXG motif repeat units follow at residues 150–157, 167–174, 189–196, and 203–210; these read CDVCSGSG, CGTCQGSG, CPTCHGRG, and CPKCHGQG.

It belongs to the DnaJ family. Homodimer. Requires Zn(2+) as cofactor.

The protein localises to the cytoplasm. In terms of biological role, participates actively in the response to hyperosmotic and heat shock by preventing the aggregation of stress-denatured proteins and by disaggregating proteins, also in an autonomous, DnaK-independent fashion. Unfolded proteins bind initially to DnaJ; upon interaction with the DnaJ-bound protein, DnaK hydrolyzes its bound ATP, resulting in the formation of a stable complex. GrpE releases ADP from DnaK; ATP binding to DnaK triggers the release of the substrate protein, thus completing the reaction cycle. Several rounds of ATP-dependent interactions between DnaJ, DnaK and GrpE are required for fully efficient folding. Also involved, together with DnaK and GrpE, in the DNA replication of plasmids through activation of initiation proteins. The polypeptide is Chaperone protein DnaJ (Rhizobium leguminosarum bv. trifolii (strain WSM2304)).